The sequence spans 687 residues: Ferric transport system permease protein FbpB (687 aa).

The next 19 membrane-spanning stretches (helical) occupy residues 10-30, 50-70, 85-105, 106-126, 141-161, 192-212, 226-246, 271-291, 318-338, 347-367, 378-398, 425-445, 450-472, 484-504, 517-537, 538-558, 594-614, 620-640, and 649-669; these read LFES…ALPS, GWSS…FWLL, LGLI…YKVS, MGYS…FAFA, LLSI…AIFI, LFLS…FALY, IFSI…VTLM, GFNG…FMIL, YNII…IVFI, PLVL…YIAG, LGSM…MWIG, IIVM…SIFY, VNWG…QGLS, IYAG…AYIV, FLTM…YILA, FNDA…SMVM, IWFI…VTSF, TVSA…AYIL, and GVAI…ILFF. The ABC transmembrane type-1 1 domain occupies 188–393; the sequence is ISNSLFLSGF…IFSLLIFIVQ (206 aa). One can recognise an ABC transmembrane type-1 2 domain in the interval 479–669; that stretch reads LINTMIYAGI…VVMMAIILFF (191 aa).

It belongs to the binding-protein-dependent transport system permease family. FbpB subfamily. As to quaternary structure, the complex is composed of two ATP-binding proteins (FbpC), two transmembrane proteins (FbpB) and a solute-binding protein (FbpA).

The protein resides in the cell inner membrane. Functionally, part of the ABC transporter complex FbpABC (TC 3.A.1.10.1) involved in Fe(3+) ions import. Probably responsible for the translocation of the substrate across the membrane. This Actinobacillus pleuropneumoniae (Haemophilus pleuropneumoniae) protein is Ferric transport system permease protein FbpB (fbpB).